The primary structure comprises 365 residues: 2-aminoethylphosphonate--pyruvate transaminase (365 aa).

The residue at position 194 (K194) is an N6-(pyridoxal phosphate)lysine.

Belongs to the class-V pyridoxal-phosphate-dependent aminotransferase family. PhnW subfamily. Homodimer. It depends on pyridoxal 5'-phosphate as a cofactor.

The enzyme catalyses (2-aminoethyl)phosphonate + pyruvate = phosphonoacetaldehyde + L-alanine. In terms of biological role, involved in phosphonate degradation. The chain is 2-aminoethylphosphonate--pyruvate transaminase from Bacillus cereus (strain 03BB102).